Reading from the N-terminus, the 150-residue chain is UPF0208 membrane protein VS_0999 (150 aa).

2 helical membrane passes run 42–62 (FGVKVMPAIAAISVLTQMVFN) and 70–90 (AVVMALFAISLPLQGMWWLGN).

Belongs to the UPF0208 family.

The protein resides in the cell inner membrane. This chain is UPF0208 membrane protein VS_0999, found in Vibrio atlanticus (strain LGP32) (Vibrio splendidus (strain Mel32)).